Consider the following 414-residue polypeptide: MPARNHTQWMATPPLQKGEWVDSRVYTDQEIFDEELEKIFKKAWVPFRHESELPKAYDFRTTSIANEPIIVTRGPDNEVRAFLNVCPHRGMLIERRPSGSLYEGQPSGNPKRMTCMFHAWQFDMKGNCVYISREKEGYQDRLPKESVGLRRLRCEVKFGGFVWVNLDDNPISLEDWAGEPFQCLRKTLEAEPMEVFHYHKAIVDTNYKLWHDTNCEFYHDFMHYHNRVTGFNDAYFARKNESFEHGHILVGTFEVNYDQYEGFESRAGLSFPHLPPNQWYMIDLFPGMNFNLRGSALRCDVVTPLGPNKVMIEFRGLGLKSDTPEERQTRINHHNSIWGPFGRNLHEDLIGVQGQGTTMRPGQESRRILHGRQENQTIHDENGMRHYYDKWGKWMNRMPSNPELPYNAPAIAAE.

The Rieske domain maps to 44-163 (WVPFRHESEL…CEVKFGGFVW (120 aa)). [2Fe-2S] cluster is bound by residues cysteine 86, histidine 88, cysteine 115, and histidine 118. A Fe cation-binding site is contributed by histidine 225.

This sequence belongs to the bacterial ring-hydroxylating dioxygenase alpha subunit family. As to quaternary structure, the MSA monooxygenase system consists of 4 proteins: the 2 subunits of the hydroxylase component (MsmA and MsmB), a ferredoxin (MsmC) and a ferredoxin reductase (MsmD). The hydroxylase component consists of a 3 alpha (MsmA) and 3 beta (MsmB) subunits. It depends on [2Fe-2S] cluster as a cofactor. The cofactor is Fe cation.

It localises to the cytoplasm. It catalyses the reaction methanesulfonate + NADH + O2 = sulfite + formaldehyde + NAD(+) + H2O. With respect to regulation, MSAMO is inhibited by metal chelators (such as bathophenanthroline, bathocuprione, neocuprione, alpha-alpha-dipyridil and sodium EDTA) and by sodium azide, sodium arsenate and potassium cyanide. Its function is as follows. Methanesulfonate monooxygenase (MSAMO) mediates the primary degradation of methanesulfonic acid (MSA) to produce formaldehyd and inorganic sulfite by initial hydroxylation of the carbon atom prior to spontaneous cleavage of the unstable hydroxymethanesulfonic acid. MSAMO has a restricted substrate range that includes only the short-chain aliphatic sulfonates (methane- to butanesulfonate) and excludes all larger molecules, such as arylsulfonates and aromatic sulfonates. All MSAMO components are required for enzyme activity. The protein is Methanesulfonate monooxygenase hydroxylase subunit alpha of Methylosulfonomonas methylovora.